We begin with the raw amino-acid sequence, 173 residues long: MTRKSRRLILIAACGAVLALALGLILSAMSGSIVFFRSPAEVAAQGVAPGTRFRLGGLVKDGSVKRGPDQNVEFAVTDTNATVPVQYRGLLPDLFREGQGIVAEGTLDVGGVFRADTVLAKHDENYMPREVADALKAQGRWQEGGGKDASKAAPKDAAKPETADATLGQRSER.

Over 1-7 (MTRKSRR) the chain is Cytoplasmic. The helical; Signal-anchor for type II membrane protein transmembrane segment at 8-28 (LILIAACGAVLALALGLILSA) threads the bilayer. The Periplasmic segment spans residues 29-173 (MSGSIVFFRS…DATLGQRSER (145 aa)). His-122 and Tyr-126 together coordinate heme. The segment at 134–173 (ALKAQGRWQEGGGKDASKAAPKDAAKPETADATLGQRSER) is disordered. Residues 145 to 162 (GGKDASKAAPKDAAKPET) show a composition bias toward basic and acidic residues.

The protein belongs to the CcmE/CycJ family.

The protein localises to the cell inner membrane. Heme chaperone required for the biogenesis of c-type cytochromes. Transiently binds heme delivered by CcmC and transfers the heme to apo-cytochromes in a process facilitated by CcmF and CcmH. The polypeptide is Cytochrome c-type biogenesis protein CcmE (Methylorubrum extorquens (strain CM4 / NCIMB 13688) (Methylobacterium extorquens)).